Consider the following 94-residue polypeptide: Putative pterin-4-alpha-carbinolamine dehydratase (94 aa).

It belongs to the pterin-4-alpha-carbinolamine dehydratase family.

It catalyses the reaction (4aS,6R)-4a-hydroxy-L-erythro-5,6,7,8-tetrahydrobiopterin = (6R)-L-erythro-6,7-dihydrobiopterin + H2O. In Mycobacterium tuberculosis (strain ATCC 25177 / H37Ra), this protein is Putative pterin-4-alpha-carbinolamine dehydratase.